Consider the following 356-residue polypeptide: WAT1-related protein At1g68170 (356 aa).

10 consecutive transmembrane segments (helical) span residues 4-24 (ITAMVVVQIATAGLNIFFKLA), 33-53 (VLVAYRLLFATLFMIPICFIF), 65-85 (LMLLALLSGLLGVVIPSILTI), 94-114 (TFTSAAGVLTPLVTFIFAALL), 125-145 (VGLAKVFGTLFGVGGALVFIF), 176-196 (ISILGALLVFGGNISISLWFL), 210-230 (WNATLMNMMGGVVAMLVALCW), 245-265 (LLTIAYAAILISGMVVAVNAW), 273-293 (LFVSVFSPVGLVIVALVGSFL), and 298-318 (LHLGSIIGTVIIVGALYIVLW). EamA domains follow at residues 14–142 (TAGL…GALV) and 191–317 (ISLW…YIVL).

The protein belongs to the drug/metabolite transporter (DMT) superfamily. Plant drug/metabolite exporter (P-DME) (TC 2.A.7.4) family.

The protein localises to the membrane. The protein is WAT1-related protein At1g68170 of Arabidopsis thaliana (Mouse-ear cress).